The primary structure comprises 138 residues: Putative pre-16S rRNA nuclease (138 aa).

Belongs to the YqgF nuclease family.

The protein localises to the cytoplasm. Could be a nuclease involved in processing of the 5'-end of pre-16S rRNA. This Glaesserella parasuis serovar 5 (strain SH0165) (Haemophilus parasuis) protein is Putative pre-16S rRNA nuclease.